The primary structure comprises 373 residues: 4-hydroxy-3-methylbut-2-en-1-yl diphosphate synthase (flavodoxin) (373 aa).

4 residues coordinate [4Fe-4S] cluster: Cys-270, Cys-273, Cys-305, and Glu-312.

It belongs to the IspG family. Requires [4Fe-4S] cluster as cofactor.

It carries out the reaction (2E)-4-hydroxy-3-methylbut-2-enyl diphosphate + oxidized [flavodoxin] + H2O + 2 H(+) = 2-C-methyl-D-erythritol 2,4-cyclic diphosphate + reduced [flavodoxin]. It participates in isoprenoid biosynthesis; isopentenyl diphosphate biosynthesis via DXP pathway; isopentenyl diphosphate from 1-deoxy-D-xylulose 5-phosphate: step 5/6. Converts 2C-methyl-D-erythritol 2,4-cyclodiphosphate (ME-2,4cPP) into 1-hydroxy-2-methyl-2-(E)-butenyl 4-diphosphate. This is 4-hydroxy-3-methylbut-2-en-1-yl diphosphate synthase (flavodoxin) from Serratia proteamaculans (strain 568).